Consider the following 96-residue polypeptide: Aspartyl/glutamyl-tRNA(Asn/Gln) amidotransferase subunit C (96 aa).

The protein belongs to the GatC family. Heterotrimer of A, B and C subunits.

The catalysed reaction is L-glutamyl-tRNA(Gln) + L-glutamine + ATP + H2O = L-glutaminyl-tRNA(Gln) + L-glutamate + ADP + phosphate + H(+). The enzyme catalyses L-aspartyl-tRNA(Asn) + L-glutamine + ATP + H2O = L-asparaginyl-tRNA(Asn) + L-glutamate + ADP + phosphate + 2 H(+). Allows the formation of correctly charged Asn-tRNA(Asn) or Gln-tRNA(Gln) through the transamidation of misacylated Asp-tRNA(Asn) or Glu-tRNA(Gln) in organisms which lack either or both of asparaginyl-tRNA or glutaminyl-tRNA synthetases. The reaction takes place in the presence of glutamine and ATP through an activated phospho-Asp-tRNA(Asn) or phospho-Glu-tRNA(Gln). The protein is Aspartyl/glutamyl-tRNA(Asn/Gln) amidotransferase subunit C of Chloroflexus aggregans (strain MD-66 / DSM 9485).